Here is a 119-residue protein sequence, read N- to C-terminus: Large ribosomal subunit protein uL22 (119 aa).

It belongs to the universal ribosomal protein uL22 family. In terms of assembly, part of the 50S ribosomal subunit.

Its function is as follows. This protein binds specifically to 23S rRNA; its binding is stimulated by other ribosomal proteins, e.g. L4, L17, and L20. It is important during the early stages of 50S assembly. It makes multiple contacts with different domains of the 23S rRNA in the assembled 50S subunit and ribosome. In terms of biological role, the globular domain of the protein is located near the polypeptide exit tunnel on the outside of the subunit, while an extended beta-hairpin is found that lines the wall of the exit tunnel in the center of the 70S ribosome. The sequence is that of Large ribosomal subunit protein uL22 from Pelodictyon phaeoclathratiforme (strain DSM 5477 / BU-1).